A 290-amino-acid polypeptide reads, in one-letter code: 4-hydroxy-tetrahydrodipicolinate synthase (290 aa).

Pyruvate is bound at residue Thr-44. Residue Tyr-132 is the Proton donor/acceptor of the active site. Catalysis depends on Lys-160, which acts as the Schiff-base intermediate with substrate. Ile-202 lines the pyruvate pocket.

Belongs to the DapA family. In terms of assembly, homotetramer; dimer of dimers.

The protein resides in the cytoplasm. The catalysed reaction is L-aspartate 4-semialdehyde + pyruvate = (2S,4S)-4-hydroxy-2,3,4,5-tetrahydrodipicolinate + H2O + H(+). It functions in the pathway amino-acid biosynthesis; L-lysine biosynthesis via DAP pathway; (S)-tetrahydrodipicolinate from L-aspartate: step 3/4. Catalyzes the condensation of (S)-aspartate-beta-semialdehyde [(S)-ASA] and pyruvate to 4-hydroxy-tetrahydrodipicolinate (HTPA). In Legionella pneumophila subsp. pneumophila (strain Philadelphia 1 / ATCC 33152 / DSM 7513), this protein is 4-hydroxy-tetrahydrodipicolinate synthase.